Here is a 202-residue protein sequence, read N- to C-terminus: ATP-dependent Clp protease proteolytic subunit 1 (202 aa).

Catalysis depends on Ser-99, which acts as the Nucleophile. The active site involves His-123.

Belongs to the peptidase S14 family. In terms of assembly, fourteen ClpP subunits assemble into 2 heptameric rings which stack back to back to give a disk-like structure with a central cavity, resembling the structure of eukaryotic proteasomes.

It is found in the cytoplasm. The enzyme catalyses Hydrolysis of proteins to small peptides in the presence of ATP and magnesium. alpha-casein is the usual test substrate. In the absence of ATP, only oligopeptides shorter than five residues are hydrolyzed (such as succinyl-Leu-Tyr-|-NHMec, and Leu-Tyr-Leu-|-Tyr-Trp, in which cleavage of the -Tyr-|-Leu- and -Tyr-|-Trp bonds also occurs).. Its function is as follows. Cleaves peptides in various proteins in a process that requires ATP hydrolysis. Has a chymotrypsin-like activity. Plays a major role in the degradation of misfolded proteins. The protein is ATP-dependent Clp protease proteolytic subunit 1 of Symbiobacterium thermophilum (strain DSM 24528 / JCM 14929 / IAM 14863 / T).